A 492-amino-acid chain; its full sequence is Ferruginol synthase (492 aa).

The chain crosses the membrane as a helical span at residues 1–21 (METIALLAALFFIALTCFLTS). The Cytoplasmic segment spans residues 22–492 (GRRRNLPPGP…VPLKIIPLRP (471 aa)). Cys-436 is a heme binding site.

The protein belongs to the cytochrome P450 family. Requires heme as cofactor.

Its subcellular location is the endoplasmic reticulum membrane. The enzyme catalyses abieta-8,11,13-triene + reduced [NADPH--hemoprotein reductase] + O2 = ferruginol + oxidized [NADPH--hemoprotein reductase] + H2O + H(+). The protein operates within secondary metabolite biosynthesis; terpenoid biosynthesis. In terms of biological role, cytochrome P450 enzyme (CYP) which catalyzes a unique two-electron oxidation cascade on abieta-8,11,13-triene to produce ferruginol, an intermediate in tanshinone biosynthesis. This Isodon rubescens (Rabdosia rubescens) protein is Ferruginol synthase.